The sequence spans 403 residues: Octaketide synthase 2 (403 aa).

Cysteine 174 is an active-site residue. CoA is bound by residues serine 281 and 318–321 (GGRA).

The protein belongs to the thiolase-like superfamily. Chalcone/stilbene synthases family. In terms of assembly, homodimer.

It functions in the pathway secondary metabolite biosynthesis; flavonoid biosynthesis. Its function is as follows. Catalyzes the iterative condensations of 8 molecules of malonyl-CoA to produce aromatic octaketides, SEK4 and SEK4b, the products of the minimal polyketide synthase for the benzoisochromanequinone actinorhodin. May be involved in the biosynthesis of the octaketide barbaloin. This Aloe arborescens (Kidachi aloe) protein is Octaketide synthase 2 (PKS4).